The sequence spans 141 residues: Ubiquitin-like protein ATG12 (141 aa).

The interval 24-54 (LELSPETAIPEPPSSVAVSPGTEEPPGDTKK) is disordered. Gly-141 participates in a covalent cross-link: Glycyl lysine isopeptide (Gly-Lys) (interchain with K-? in acceptor protein).

The protein belongs to the ATG12 family. In terms of assembly, forms a conjugate with ATG5. Part of the minor complex composed of 4 sets of ATG12-ATG5 and ATG16L1 (400 kDa); this complex interacts with ATG3 leading to disruption of ATG7 interaction and promotion of ATG8-like proteins lipidation. Forms an 800-kDa complex composed of ATG12-ATG5 and ATG16L2. Interacts with DHX58/RIG-1, IFIH1/MDA5 and MAVS/IPS-1 in monomeric form as well as in ATG12-ATG5 conjugate. The interaction with MAVS is further enhanced upon vesicular stomatitis virus (VSV) infection. Interacts with ATG3; this interaction is essential for phosphatidylethanolamine (PE)-conjugated ATG8-like proteins formation. Interacts with ATG7. Interacts with ATG10. The ATG12-ATG5 conjugate interacts with RAB33A; this interaction is bridged by ATG16L1 and promotes ATG12-ATG5-ATG16L1 complex recruitment to phagophores. Interacts with TECPR1. Interacts with SH3BGRL. The ATG12-ATG5 conjugate interacts with PDCD6IP (via the BRO1 domain); this interaction is bridged by ATG12 and promotes multiple PDCD6IP-mediated functions such as endolysosomal trafficking, macroautophagy and exosome biogenesis. Post-translationally, acetylated by EP300.

It is found in the cytoplasm. Its subcellular location is the preautophagosomal structure membrane. Its function is as follows. Ubiquitin-like protein involved in autophagy vesicles formation. Conjugation with ATG5 through a ubiquitin-like conjugating system involving also ATG7 as an E1-like activating enzyme and ATG10 as an E2-like conjugating enzyme, is essential for its function. The ATG12-ATG5 conjugate acts as an E3-like enzyme which is required for lipidation of ATG8 family proteins and their association to the vesicle membranes. The ATG12-ATG5 conjugate also negatively regulates the innate antiviral immune response by blocking the type I IFN production pathway through direct association with RARRES3 and MAVS. Also plays a role in translation or delivery of incoming viral RNA to the translation apparatus. As part of the ATG8 conjugation system with ATG5 and ATG16L1, required for recruitment of LRRK2 to stressed lysosomes and induction of LRRK2 kinase activity in response to lysosomal stress. The protein is Ubiquitin-like protein ATG12 of Rattus norvegicus (Rat).